A 183-amino-acid chain; its full sequence is Photosystem I assembly protein Ycf4 (183 aa).

Transmembrane regions (helical) follow at residues Trp23–Phe43 and Val64–Ile84.

It belongs to the Ycf4 family.

It localises to the plastid. It is found in the chloroplast thylakoid membrane. Its function is as follows. Seems to be required for the assembly of the photosystem I complex. The polypeptide is Photosystem I assembly protein Ycf4 (Stigeoclonium helveticum (Green alga)).